A 78-amino-acid chain; its full sequence is Small ribosomal subunit protein bS16c (78 aa).

It belongs to the bacterial ribosomal protein bS16 family.

It is found in the plastid. The protein resides in the chloroplast. The protein is Small ribosomal subunit protein bS16c of Adiantum capillus-veneris (Maidenhair fern).